Reading from the N-terminus, the 448-residue chain is Signal recognition particle 54 kDa protein (448 aa).

GTP-binding positions include 107–114 (GIQGSGKT), 189–193 (DSAGR), and 247–250 (TKLD).

This sequence belongs to the GTP-binding SRP family. SRP54 subfamily. Part of the signal recognition particle protein translocation system, which is composed of SRP and FtsY. Archaeal SRP consists of a 7S RNA molecule of 300 nucleotides and two protein subunits: SRP54 and SRP19.

The protein resides in the cytoplasm. It catalyses the reaction GTP + H2O = GDP + phosphate + H(+). In terms of biological role, involved in targeting and insertion of nascent membrane proteins into the cytoplasmic membrane. Binds to the hydrophobic signal sequence of the ribosome-nascent chain (RNC) as it emerges from the ribosomes. The SRP-RNC complex is then targeted to the cytoplasmic membrane where it interacts with the SRP receptor FtsY. This Thermococcus onnurineus (strain NA1) protein is Signal recognition particle 54 kDa protein.